A 146-amino-acid chain; its full sequence is Leghemoglobin Lb120-8 (146 aa).

The region spanning G2–N146 is the Globin domain. Nitrated tyrosine occurs at positions 24 and 29. S44 lines the heme b pocket. The residue at position 44 (S44) is a Phosphoserine. H61 contacts O2. Heme b-binding residues include K64, H93, and K96. Y134 carries the nitrated tyrosine modification.

The protein belongs to the plant globin family. In terms of assembly, monomer. In terms of processing, nitrated in effective nodules and particularly in hypoxic conditions; this mechanism may play a protective role in the symbiosis by buffering toxic peroxynitrite NO(2)(-). Nitration level decrease during nodule senescence. Phosphorylation at Ser-44 disrupts the molecular environment of its porphyrin ring oxygen binding pocket, thus leading to a reduced oxygen consumption and to the delivery of oxygen O(2) to symbiosomes. As to expression, root nodules.

It is found in the cytoplasm. The protein resides in the cytosol. Its subcellular location is the nucleus. Functionally, leghemoglobin that reversibly binds oxygen O(2) through a pentacoordinated heme iron. In root nodules, facilitates the diffusion of oxygen to the bacteroids while preventing the bacterial nitrogenase from being inactivated by buffering dioxygen, nitric oxide and carbon monoxide, and promoting the formation of reactive oxygen species (ROS, e.g. H(2)O(2)). This role is essential for symbiotic nitrogen fixation (SNF). This is Leghemoglobin Lb120-8 from Pisum sativum (Garden pea).